The chain runs to 326 residues: Phosphatidylinositol:ceramide inositolphosphotransferase (326 aa).

6 helical membrane passes run 33–53, 82–102, 115–135, 169–189, 199–219, and 222–242; these read LLLAGLVFQYIHGLAARGVHY, SVFTFIFISFLLWSFHPFIYH, VLAFLVASQFLRIITFYSTQL, VLFGCGDLIFSSHMIFTLVFV, RLIKILAWLMAIIQSLLIIAS, and HYSVDVVVAWYTVNLVVFFID. The active site involves His181. Active-site residues include His222 and Asp226. The segment at 306-326 is disordered; the sequence is MNGKHGEDINHTLSDATPNGT. Residues 316-326 show a composition bias toward polar residues; sequence HTLSDATPNGT.

This sequence belongs to the sphingomyelin synthase family.

The protein localises to the golgi apparatus. Its subcellular location is the trans-Golgi network membrane. Catalyzes the transfer of the phosphorylinositol group from phosphatidylinositol (PI) to phytoceramide, an essential step in sphingolipid biosynthesis. May play an important role in modulating plant programmed cell death (PCD) associated with defense (e.g. toward Golovinomyces cichoracearum) by promoting sphingolipid metabolism and regulating ceramide accumulation. This is Phosphatidylinositol:ceramide inositolphosphotransferase (ERH1) from Oryza sativa subsp. indica (Rice).